The primary structure comprises 504 residues: Glutamate--tRNA ligase (504 aa).

The 'HIGH' region signature appears at 10–20 (PSPTGDPHVGT). A 'KMSKS' region motif is present at residues 251 to 255 (KLSKR). Residue Lys254 coordinates ATP.

It belongs to the class-I aminoacyl-tRNA synthetase family. Glutamate--tRNA ligase type 1 subfamily. As to quaternary structure, monomer.

It localises to the cytoplasm. The catalysed reaction is tRNA(Glu) + L-glutamate + ATP = L-glutamyl-tRNA(Glu) + AMP + diphosphate. Its function is as follows. Catalyzes the attachment of glutamate to tRNA(Glu) in a two-step reaction: glutamate is first activated by ATP to form Glu-AMP and then transferred to the acceptor end of tRNA(Glu). The chain is Glutamate--tRNA ligase from Cellvibrio japonicus (strain Ueda107) (Pseudomonas fluorescens subsp. cellulosa).